The following is a 116-amino-acid chain: Orphan antitoxin YagB (116 aa).

The protein belongs to the CbeA/YafW/YfjZ antitoxin family.

Its function is as follows. Putative antitoxin component of a type IV toxin-antitoxin (TA) system; its cognate toxin is unknown. The sequence is that of Orphan antitoxin YagB (yagB) from Escherichia coli (strain K12).